The following is a 211-amino-acid chain: MKLNKKGLLIILSGPSGVGKATVRKALFEMTNHNFVYSVSATTRKPRPGEQDGKDYHFLTKEEFEKGIENNCFLEWAKFIDHYYGTPKKQIQDFLKQGKEVFLEIEVEGATHLRKKRMPNTVFIFLVPPKKKDLYDRLKKRGTEQEINIVQRIAKANNEFRLAHKYDYIVVNDEVANAADRIIAIIRAEHAKTKRSIRNYLKILEDNVYAE.

One can recognise a Guanylate kinase-like domain in the interval 7–187 (GLLIILSGPS…AADRIIAIIR (181 aa)). 14 to 21 (GPSGVGKA) is an ATP binding site.

It belongs to the guanylate kinase family.

The protein resides in the cytoplasm. It catalyses the reaction GMP + ATP = GDP + ADP. In terms of biological role, essential for recycling GMP and indirectly, cGMP. In Aster yellows witches'-broom phytoplasma (strain AYWB), this protein is Guanylate kinase.